The primary structure comprises 131 residues: Small ribosomal subunit protein bS6 (131 aa).

Residues R92–N131 are disordered.

This sequence belongs to the bacterial ribosomal protein bS6 family.

In terms of biological role, binds together with bS18 to 16S ribosomal RNA. The polypeptide is Small ribosomal subunit protein bS6 (Paracoccus denitrificans (strain Pd 1222)).